The following is a 142-amino-acid chain: MPFGEYPYTIDDKGRVVMPPPFREFVEDGMILTRGMEGCLYVFPLASWRRVEEQLEGLPLTDAESRAFVRFFYSGANKARLDNQSRVSVPQTLRTFAGLDGDVIVAGAPGRLELWNPGRWEEAINAVQHTPPKPDLLANFVA.

SpoVT-AbrB domains are found at residues Glu5 to Ser47 and Ala76 to Arg119.

It belongs to the MraZ family. As to quaternary structure, forms oligomers.

The protein resides in the cytoplasm. It localises to the nucleoid. This chain is Transcriptional regulator MraZ, found in Deinococcus deserti (strain DSM 17065 / CIP 109153 / LMG 22923 / VCD115).